The chain runs to 708 residues: Glutamate--tRNA ligase, cytoplasmic (708 aa).

Interaction with ARC1 stretches follow at residues 106–115 and 141–157; these read NLRTFILGGL and KVDV…EMDP. L-glutamate is bound at residue 205 to 207; sequence RFP. A 'HIGH' region motif is present at residues 210 to 219; sequence PSGYLHIGHA. His-215 contributes to the ATP binding site. Residue Asp-241 coordinates L-glutamate. Phosphothreonine is present on Thr-300. L-glutamate contacts are provided by residues 382-386 and Arg-400; that span reads YDFCV. ATP-binding positions include Glu-403 and 437–441; that span reads LLSKR. The 'KMSKS' region motif lies at 437 to 441; it reads LLSKR.

Belongs to the class-I aminoacyl-tRNA synthetase family. Glutamate--tRNA ligase type 2 subfamily. In terms of assembly, component of a yeast aminoacyl-tRNA synthase (aaRS) complex formed by methionyl-tRNA synthase MES1, glutamyl-tRNA synthase GUS1 and the tRNA aminoacylation cofactor ARC1 in a stoichiometric complex. Interacts (via N-ter) with ARC1 (via N-ter). Can also form a stable binary complex with ARC1 that is functional in terms of aminoacylation. ARC1 increases the affinity for cognate tRNAs due to the presence of a tRNA binding domain in the middle and C-terminal part of ARC1.

Its subcellular location is the cytoplasm. The protein localises to the mitochondrion. The enzyme catalyses tRNA(Glu) + L-glutamate + ATP = L-glutamyl-tRNA(Glu) + AMP + diphosphate. Functionally, catalyzes the attachment of glutamate to tRNA(Glu) in a two-step reaction: glutamate is first activated by ATP to form Glu-AMP and then transferred to the acceptor end of tRNA(Glu). In mitochondria, constitutes the nondiscriminating glutamyl-tRNA synthase that generates the mitochondrial mischarged glutamyl-tRNA(Gln) substrate for the tRNA-dependent amidotransferase (AdT), which generates mitochondrial glutaminyl-tRNA(Gln) by transamidation of glutamyl-tRNA(Gln). The polypeptide is Glutamate--tRNA ligase, cytoplasmic (GUS1) (Saccharomyces cerevisiae (strain ATCC 204508 / S288c) (Baker's yeast)).